A 175-amino-acid chain; its full sequence is uncharacterized protein (175 aa).

Positions 1–14 (MNTSSRIQLPSSND) are enriched in polar residues. 2 disordered regions span residues 1–31 (MNTS…SKRS) and 127–175 (ARSR…QSKR). Basic and acidic residues predominate over residues 16 to 27 (HVYDGRSNEPKA). Positions 130–149 (RASSVSNSRLNSRTNSSVSL) are enriched in low complexity. The segment covering 154 to 175 (GSSSWKNKIKNAVSNVTDQSKR) has biased composition (polar residues).

The protein localises to the cytoplasm. It is found in the nucleus. This is an uncharacterized protein from Schizosaccharomyces pombe (strain 972 / ATCC 24843) (Fission yeast).